Reading from the N-terminus, the 507-residue chain is Probable aldehyde dehydrogenase (507 aa).

219 to 225 (GFGVEAG) provides a ligand contact to NAD(+). Active-site residues include glutamate 263 and cysteine 302.

This sequence belongs to the aldehyde dehydrogenase family.

It carries out the reaction an aldehyde + NAD(+) + H2O = a carboxylate + NADH + 2 H(+). This is Probable aldehyde dehydrogenase from Streptomyces coelicolor (strain ATCC BAA-471 / A3(2) / M145).